We begin with the raw amino-acid sequence, 470 residues long: Nuclear receptor subfamily 0 group B member 1 (470 aa).

3 repeat units span residues 1 to 67, 68 to 133, and 134 to 200. A 4 X 67 AA tandem repeats region spans residues 1 to 253; that stretch reads MAGENHQWQG…RPVALKNPQV (253 aa). Short sequence motifs (LXXLL motif) lie at residues 13–17, 80–84, and 146–150; these read LYNML, LYSML, and LYSLL. One copy of the 4; truncated repeat lies at 201-253; it reads FCGEDHPQQGSTLYCMPTSTNQAQAAPEERPRAPWWDASSGALRPVALKNPQV. The NR LBD domain occupies 215-469; it reads CMPTSTNQAQ…DMMLEMLCTK (255 aa). An AF-2 motif motif is present at residues 461–466; that stretch reads MMLEML.

This sequence belongs to the nuclear hormone receptor family. NR0 subfamily. As to quaternary structure, homodimer. Interacts with NR5A1, NR5A2, NR0B2 and with COPS2. Interacts with ESRRB; represses ESRRB activity at the GATA6 promoter.

It is found in the nucleus. It localises to the cytoplasm. Nuclear receptor that lacks a DNA-binding domain and acts as a corepressor that inhibits the transcriptional activity of other nuclear receptors through heterodimeric interactions. Component of a cascade required for the development of the hypothalamic-pituitary-adrenal-gonadal axis. May also have a role in the development of the embryo and in the maintenance of embryonic stem cell pluripotency. This is Nuclear receptor subfamily 0 group B member 1 (NR0B1) from Pongo pygmaeus (Bornean orangutan).